Reading from the N-terminus, the 368-residue chain is Transaldolase (368 aa).

K140 acts as the Schiff-base intermediate with substrate in catalysis.

Belongs to the transaldolase family. Type 2 subfamily.

It localises to the cytoplasm. The enzyme catalyses D-sedoheptulose 7-phosphate + D-glyceraldehyde 3-phosphate = D-erythrose 4-phosphate + beta-D-fructose 6-phosphate. It participates in carbohydrate degradation; pentose phosphate pathway; D-glyceraldehyde 3-phosphate and beta-D-fructose 6-phosphate from D-ribose 5-phosphate and D-xylulose 5-phosphate (non-oxidative stage): step 2/3. In terms of biological role, transaldolase is important for the balance of metabolites in the pentose-phosphate pathway. The sequence is that of Transaldolase from Kocuria rhizophila (strain ATCC 9341 / DSM 348 / NBRC 103217 / DC2201).